Consider the following 151-residue polypeptide: Chaperonin GroEL (151 aa).

41 to 45 (DGTTT) contacts ATP.

Belongs to the chaperonin (HSP60) family. In terms of assembly, forms a cylinder of 14 subunits composed of two heptameric rings stacked back-to-back. Interacts with the co-chaperonin GroES.

The protein localises to the cytoplasm. The catalysed reaction is ATP + H2O + a folded polypeptide = ADP + phosphate + an unfolded polypeptide.. Functionally, together with its co-chaperonin GroES, plays an essential role in assisting protein folding. The GroEL-GroES system forms a nano-cage that allows encapsulation of the non-native substrate proteins and provides a physical environment optimized to promote and accelerate protein folding. The polypeptide is Chaperonin GroEL (Mycobacterium marinum).